Consider the following 319-residue polypeptide: GTP cyclohydrolase MptA (319 aa).

The protein belongs to the GTP cyclohydrolase IV family. Homodimer. Requires Fe(2+) as cofactor.

The catalysed reaction is GTP + H2O = 7,8-dihydroneopterin 2',3'-cyclic phosphate + formate + diphosphate + H(+). It participates in cofactor biosynthesis; 5,6,7,8-tetrahydromethanopterin biosynthesis. Its function is as follows. Converts GTP to 7,8-dihydro-D-neopterin 2',3'-cyclic phosphate, the first intermediate in the biosynthesis of coenzyme methanopterin. This Methanosarcina barkeri (strain Fusaro / DSM 804) protein is GTP cyclohydrolase MptA.